A 127-amino-acid polypeptide reads, in one-letter code: Putative pre-16S rRNA nuclease (127 aa).

Belongs to the YqgF nuclease family.

It localises to the cytoplasm. Could be a nuclease involved in processing of the 5'-end of pre-16S rRNA. The sequence is that of Putative pre-16S rRNA nuclease from Campylobacter jejuni subsp. jejuni serotype O:6 (strain 81116 / NCTC 11828).